The primary structure comprises 132 residues: Agouti-signaling protein (132 aa).

Residues 1 to 22 (MDVTRLLLATLLVFLCFFTAYS) form the signal peptide. The N-linked (GlcNAc...) asparagine glycan is linked to asparagine 39. A disordered region spans residues 62–88 (ISRKEAEKKRSSKKEASMKKVARPRTP). Over residues 63 to 79 (SRKEAEKKRSSKKEASM) the composition is skewed to basic and acidic residues. Cystine bridges form between cysteine 93–cysteine 108, cysteine 100–cysteine 114, cysteine 107–cysteine 125, cysteine 111–cysteine 132, and cysteine 116–cysteine 123. In terms of domain architecture, Agouti spans 93 to 132 (CVATRDSCKPPAPACCDPCASCQCRFFRSACSCRVLSLNC).

It localises to the secreted. Functionally, involved in the regulation of melanogenesis. The binding of ASP to MC1R precludes alpha-MSH initiated signaling and thus blocks production of cAMP, leading to a down-regulation of eumelanogenesis (brown/black pigment) and thus increasing synthesis of pheomelanin (yellow/red pigment). This is Agouti-signaling protein (ASIP) from Chlorocebus aethiops (Green monkey).